The chain runs to 263 residues: Retinoic acid early transcript 1E (263 aa).

The first 30 residues, 1-30 (MRRISLTSSPVRLLLFLLLLLIALEIMVGG), serve as a signal peptide directing secretion. An MHC class I alpha-1 like; down-regulates the cell surface expression of KLRK1 region spans residues 31-116 (HSLCFNFTIK…DIKPQIKTSD (86 aa)). Residues 31–225 (HSLCFNFTIK…IHWSSSSLPD (195 aa)) lie on the Extracellular side of the membrane. N-linked (GlcNAc...) asparagine glycans are attached at residues asparagine 36, asparagine 154, and asparagine 212. Positions 117–207 (PSTLQVEMFC…GHWEAMPEPT (91 aa)) are MHC class I alpha-2 like; down-regulates the cell surface expression of KLRK1. An intrachain disulfide couples cysteine 126 to cysteine 189. Residues 226–248 (RWIILGAFILLVLMGIVLICVWW) form a helical membrane-spanning segment. Topologically, residues 249–263 (QNGEWQAGLWPLRTS) are cytoplasmic.

Belongs to the MHC class I family. In terms of assembly, binds to KLRK1/NKG2D. As to quaternary structure, (Microbial infection) Contrary to other family members, does not interact with CMV glycoprotein UL16. As to expression, predominantly expressed in the skin, but also expressed in testis and trachea. Up-regulated in tumor cells of different origins. Expression progressively decreased after treatment of tumor cells with retinoic acid.

It localises to the membrane. Its subcellular location is the secreted. Binds and activates the KLRK1/NKG2D receptor, mediating natural killer cell cytotoxicity. This chain is Retinoic acid early transcript 1E, found in Homo sapiens (Human).